We begin with the raw amino-acid sequence, 387 residues long: Putative acid--amine ligase YjfC (387 aa).

101 to 103 (RMD) contacts ATP. Residues D103, E116, and N118 each coordinate Mg(2+). Residues K265, K302, G309, Q337, and 372–374 (LIT) contribute to the ATP site.

This sequence belongs to the glutathionylspermidine synthase preATP-grasp family.

May be a ligase forming an amide bond. Shows ATPase activity. Despite its similarity to the C-terminal synthetase domain of Gss, is not a glutathionylspermidine (Gsp) synthetase. Cannot synthesize Gsp, glutathione (GSH), or GSH intermediates, from GSH and spermidine, cysteine and glutamate, gamma-glutamylcysteine and spermidine, and gamma-glutamylcysteine and glycine. Does not bind to Gsp. This chain is Putative acid--amine ligase YjfC (yjfC), found in Escherichia coli (strain K12).